The chain runs to 1071 residues: Carbamoyl phosphate synthase large chain (1071 aa).

The tract at residues 1–403 (MPKRTDLKSI…SFQKALRGLE (403 aa)) is carboxyphosphate synthetic domain. Residues arginine 129, arginine 169, glycine 175, glycine 176, glutamine 208, valine 210, glutamate 215, glycine 241, valine 242, histidine 243, glutamine 285, and glutamate 299 each coordinate ATP. The ATP-grasp 1 domain maps to 133–328 (KEAMEKIGLS…IAKVAAKLAV (196 aa)). Mg(2+)-binding residues include glutamine 285, glutamate 299, and asparagine 301. 3 residues coordinate Mn(2+): glutamine 285, glutamate 299, and asparagine 301. The interval 404-548 (TGLCGFNPRS…YSTYEEECEA (145 aa)) is oligomerization domain. A carbamoyl phosphate synthetic domain region spans residues 549–930 (RPSDRKKVMI…AYYKAQLGAG (382 aa)). An ATP-grasp 2 domain is found at 673 to 864 (QKVLNDLGLR…LAKVGARCMA (192 aa)). ATP is bound by residues arginine 709, phenylalanine 748, leucine 750, glutamate 755, glycine 780, isoleucine 781, histidine 782, serine 783, glutamine 823, and glutamate 835. Residues glutamine 823, glutamate 835, and asparagine 837 each contribute to the Mg(2+) site. Glutamine 823, glutamate 835, and asparagine 837 together coordinate Mn(2+). Positions 931–1071 (ERLNPTGKIF…ELHGRLKNRS (141 aa)) constitute an MGS-like domain. An allosteric domain region spans residues 931-1071 (ERLNPTGKIF…ELHGRLKNRS (141 aa)).

This sequence belongs to the CarB family. As to quaternary structure, composed of two chains; the small (or glutamine) chain promotes the hydrolysis of glutamine to ammonia, which is used by the large (or ammonia) chain to synthesize carbamoyl phosphate. Tetramer of heterodimers (alpha,beta)4. Mg(2+) serves as cofactor. Requires Mn(2+) as cofactor.

It catalyses the reaction hydrogencarbonate + L-glutamine + 2 ATP + H2O = carbamoyl phosphate + L-glutamate + 2 ADP + phosphate + 2 H(+). The catalysed reaction is hydrogencarbonate + NH4(+) + 2 ATP = carbamoyl phosphate + 2 ADP + phosphate + 2 H(+). It participates in amino-acid biosynthesis; L-arginine biosynthesis; carbamoyl phosphate from bicarbonate: step 1/1. It functions in the pathway pyrimidine metabolism; UMP biosynthesis via de novo pathway; (S)-dihydroorotate from bicarbonate: step 1/3. Its function is as follows. Large subunit of the glutamine-dependent carbamoyl phosphate synthetase (CPSase). CPSase catalyzes the formation of carbamoyl phosphate from the ammonia moiety of glutamine, carbonate, and phosphate donated by ATP, constituting the first step of 2 biosynthetic pathways, one leading to arginine and/or urea and the other to pyrimidine nucleotides. The large subunit (synthetase) binds the substrates ammonia (free or transferred from glutamine from the small subunit), hydrogencarbonate and ATP and carries out an ATP-coupled ligase reaction, activating hydrogencarbonate by forming carboxy phosphate which reacts with ammonia to form carbamoyl phosphate. This Neisseria meningitidis serogroup A / serotype 4A (strain DSM 15465 / Z2491) protein is Carbamoyl phosphate synthase large chain.